Reading from the N-terminus, the 146-residue chain is Hemoglobin subunit beta (146 aa).

The region spanning 2 to 146 is the Globin domain; the sequence is QWTAEEKQLI…VAHALARKYH (145 aa). Residues histidine 63 and histidine 92 each contribute to the heme b site.

Belongs to the globin family. Heterotetramer of two alpha chains and two beta chains. As to expression, red blood cells.

Its function is as follows. Involved in oxygen transport from the lung to the various peripheral tissues. This chain is Hemoglobin subunit beta (HBB), found in Passer montanus (Eurasian tree sparrow).